The chain runs to 1481 residues: Cystic fibrosis transmembrane conductance regulator (1481 aa).

The Cytoplasmic segment spans residues 1–77 (MQRSPLEKAS…KLINALRRCF (77 aa)). A helical transmembrane segment spans residues 78–98 (FWRFTFYGILLYLGEVTKAVQ). Residues 81–365 (FTFYGILLYL…WAVQTWYDSL (285 aa)) form the ABC transmembrane type-1 1 domain. Residues 99 to 122 (PLLLGRIIASYDPDNKTERSIAIY) lie on the Extracellular side of the membrane. The chain crosses the membrane as a helical span at residues 123–146 (LGIGLCLLFIVRTLLLHPAIFGLH). The Cytoplasmic portion of the chain corresponds to 147 to 195 (HIGMQMRIAMFSLIYKKTLKLSSRVLDKISIGQLVSLLSNNLNKFDEGL). The helical transmembrane segment at 196–216 (ALAHFVWIAPLQVALLMGLIW) threads the bilayer. The Extracellular segment spans residues 217–222 (ELLQAS). The chain crosses the membrane as a helical span at residues 223-243 (AFCGLGFLIVLALFQAGLGRM). Residues 244–298 (MMKYRDQRAGKINERLVITSEMIENIQSVKAYCWEEAMEKIIENLRQTELKLTRK) are Cytoplasmic-facing. A helical transmembrane segment spans residues 299-319 (AAYVRYFNSSAFFFSGFFVVF). Topologically, residues 320–339 (LSVLPYALIKGIVLRKIFTT) are extracellular. Residues 340–358 (ISFCIVLRMAVTRQFPWAV) traverse the membrane as a helical segment. The Cytoplasmic segment spans residues 359–858 (QTWYDSLGAI…YLRYITLHKS (500 aa)). ATP is bound by residues Trp-401, Ser-434, 458 to 465 (GSTGAGKT), and Gln-493. The ABC transporter 1 domain occupies 423–646 (NGDDNLFFSN…RPDFSSKLMG (224 aa)). A lipid anchor (S-palmitoyl cysteine) is attached at Cys-524. Phosphoserine occurs at positions 549 and 660. Positions 654–831 (SSERRNSILT…EEINEEDLKE (178 aa)) are disordered R region. Position 670 is a phosphoserine; by PKA (Ser-670). Position 686 is a phosphoserine (Ser-686). Residue Lys-688 forms a Glycyl lysine isopeptide (Lys-Gly) (interchain with G-Cter in ubiquitin) linkage. Phosphoserine occurs at positions 700 and 712. Thr-717 bears the Phosphothreonine mark. Ser-737, Ser-753, Ser-768, Ser-790, Ser-795, and Ser-813 each carry phosphoserine. Residues 859 to 879 (LIFVLIWCLVIFLAEVAASLV) form a helical membrane-spanning segment. Residues 859–1155 (LIFVLIWCLV…AVNSSIDVDS (297 aa)) form the ABC transmembrane type-1 2 domain. At 880-918 (VLWLLGNTPFQDKGNSTYSRNNSYAVIITNTSSYYVFYI) the chain is on the extracellular side. N-linked (GlcNAc...) asparagine glycosylation is found at Asn-894, Asn-900, and Asn-909. The discontinuously helical transmembrane segment at 919 to 939 (YVGVADTLLALGFFRGLPLVH) threads the bilayer. Over 940-990 (TLITVSKMLHHKMLHSVLQAPMSTLNTLKAGGILNRFSKDIAILDDLLPLT) the chain is Cytoplasmic. The helical transmembrane segment at 991–1011 (IFDFIQLLLIVIGAIAVVSVL) threads the bilayer. The Extracellular portion of the chain corresponds to 1012–1013 (QP). The chain crosses the membrane as a helical span at residues 1014-1034 (YIFLATVPVIAAFILLRAYFL). The Cytoplasmic segment spans residues 1035-1095 (QTSQQLKQLE…TANWFLYLST (61 aa)). The chain crosses the membrane as a helical span at residues 1096–1116 (LRWFQMRIEMIFVIFFIAVTF). At 1117–1130 (ISILTTGEGEGTVG) the chain is on the extracellular side. A helical transmembrane segment spans residues 1131 to 1151 (IILTLAMNIMSTLQWAVNSSI). Residues 1152–1481 (DVDSLMRSVS…TEEEVQETRL (330 aa)) are Cytoplasmic-facing. Residues 1211-1444 (MTIKDLTAKY…KSLFRQAISH (234 aa)) form the ABC transporter 2 domain. ATP-binding positions include Tyr-1220 and 1245–1252 (GRTGSGKS). The tract at residues 1387 to 1481 (RALKQAFADC…TEEEVQETRL (95 aa)) is interaction with GORASP2. Residue Cys-1396 is the site of S-palmitoyl cysteine attachment. Ser-1445 and Ser-1457 each carry phosphoserine. Residues 1453–1481 (HRNSSKYKSQPQIASLKEETEEEVQETRL) are disordered. Positions 1471–1481 (ETEEEVQETRL) are enriched in acidic residues. A PDZ-binding motif is present at residues 1479–1481 (TRL).

It belongs to the ABC transporter superfamily. ABCC family. CFTR transporter (TC 3.A.1.202) subfamily. As to quaternary structure, monomer; does not require oligomerization for channel activity. May form oligomers in the membrane. Interacts with SLC26A3, SLC26A6 and NHERF1. Interacts with SHANK2. Interacts with MYO6. Interacts (via C-terminus) with GOPC (via PDZ domain); this promotes CFTR internalization and thereby decreases channel activity. Interacts with SLC4A7 through NHERF1. Found in a complex with MYO5B and RAB11A. Interacts with ANO1. Interacts with SLC26A8. Interacts with AHCYL1; the interaction increases CFTR activity. Interacts with CSE1L. The core-glycosylated form interacts with GORASP2 (via PDZ GRASP-type 1 domain) in respone to ER stress. Interacts with MARCHF2; the interaction leads to CFTR ubiqtuitination and degradation. Interacts with ADGRG2. N-glycosylated. Post-translationally, phosphorylated; cAMP treatment promotes phosphorylation and activates the channel. Dephosphorylation decreases the ATPase activity (in vitro). Phosphorylation at PKA sites activates the channel. Phosphorylation at PKC sites enhances the response to phosphorylation by PKA. Phosphorylated by AMPK; this inhibits channel activity. In terms of processing, ubiquitinated, leading to its degradation in the lysosome. Deubiquitination by USP10 in early endosomes enhances its endocytic recycling to the cell membrane. Ubiquitinated by RNF185 during ER stress. Ubiquitinated by MARCHF2.

Its subcellular location is the apical cell membrane. It localises to the early endosome membrane. The protein localises to the cell membrane. The protein resides in the recycling endosome membrane. It is found in the endoplasmic reticulum membrane. Its subcellular location is the nucleus. It carries out the reaction ATP + H2O + closed Cl(-) channel = ADP + phosphate + open Cl(-) channel.. The enzyme catalyses chloride(in) = chloride(out). It catalyses the reaction hydrogencarbonate(in) = hydrogencarbonate(out). The catalysed reaction is ATP + H2O = ADP + phosphate + H(+). Its function is as follows. Epithelial ion channel that plays an important role in the regulation of epithelial ion and water transport and fluid homeostasis. Mediates the transport of chloride ions across the cell membrane. Possesses an intrinsic ATPase activity and utilizes ATP to gate its channel; the passive flow of anions through the channel is gated by cycles of ATP binding and hydrolysis by the ATP-binding domains. The ion channel is also permeable to HCO(3)(-); selectivity depends on the extracellular chloride concentration. Exerts its function also by modulating the activity of other ion channels and transporters. Contributes to the regulation of the pH and the ion content of the epithelial fluid layer. Modulates the activity of the epithelial sodium channel (ENaC) complex, in part by regulating the cell surface expression of the ENaC complex. May regulate bicarbonate secretion and salvage in epithelial cells by regulating the transporter SLC4A7. Can inhibit the chloride channel activity of ANO1. Plays a role in the chloride and bicarbonate homeostasis during sperm epididymal maturation and capacitation. This is Cystic fibrosis transmembrane conductance regulator from Aotus nancymaae (Ma's night monkey).